Here is a 282-residue protein sequence, read N- to C-terminus: Undecaprenyl-diphosphatase (282 aa).

The next 5 helical transmembrane spans lie at 96–116, 123–143, 198–218, 229–249, and 260–280; these read WMVI…KDII, MWIT…AEKW, FLLA…DAFA, QLAV…AWLL, and FAAY…TGML.

This sequence belongs to the UppP family.

It localises to the cell membrane. It catalyses the reaction di-trans,octa-cis-undecaprenyl diphosphate + H2O = di-trans,octa-cis-undecaprenyl phosphate + phosphate + H(+). Catalyzes the dephosphorylation of undecaprenyl diphosphate (UPP). Confers resistance to bacitracin. In Corynebacterium diphtheriae (strain ATCC 700971 / NCTC 13129 / Biotype gravis), this protein is Undecaprenyl-diphosphatase.